The chain runs to 631 residues: Chaperone protein DnaK (631 aa).

Phosphothreonine; by autocatalysis is present on T197. The interval 599–631 (AQSDAGAAGSASEENTTSNEKVVDADFEDVEKK) is disordered. Positions 603 to 612 (AGAAGSASEE) are enriched in low complexity.

It belongs to the heat shock protein 70 family.

Functionally, acts as a chaperone. This Rickettsia bellii (strain RML369-C) protein is Chaperone protein DnaK.